Reading from the N-terminus, the 169-residue chain is Putative hydrolase 111R (169 aa).

The Nudix hydrolase domain occupies 46-169; that stretch reads FEKRKAGVFV…QKILMALSCN (124 aa). Residues 76–98 carry the Nudix box motif; the sequence is GHMEAYDHSPKTCAERELKEETG. Mg(2+)-binding residues include Glu-92, Glu-96, and Asp-138.

The protein belongs to the Nudix hydrolase family. Requires Mg(2+) as cofactor. It depends on Mn(2+) as a cofactor.

This is Putative hydrolase 111R from Aedes vexans (Inland floodwater mosquito).